The chain runs to 445 residues: Mitochondrial enolase superfamily member 1 (445 aa).

Residues 24-26 (GSD), Y34, and K220 each bind substrate. The Proton donor/acceptor role is filled by K222. D250 contributes to the Mg(2+) binding site. Residues N252, E276, E305, 355-357 (HAG), and E386 contribute to the substrate site. The Mg(2+) site is built by E276 and E305. H355 is an active-site residue.

It belongs to the mandelate racemase/muconate lactonizing enzyme family. ENOSF1 subfamily. Requires Mg(2+) as cofactor.

The protein localises to the mitochondrion. It carries out the reaction L-fuconate = 2-dehydro-3-deoxy-L-fuconate + H2O. Functionally, plays a role in the catabolism of L-fucose, a sugar that is part of the carbohydrates that are attached to cellular glycoproteins. Catalyzes the dehydration of L-fuconate to 2-keto-3-deoxy-L-fuconate by the abstraction of the 2-proton to generate an enediolate intermediate that is stabilized by the magnesium ion. May down-regulate thymidylate synthase activity, possibly already at the RNA level, by promoting the degradation of TYMS mRNA via an antisense RNA-based mechanism. The protein is Mitochondrial enolase superfamily member 1 (enosf1) of Xenopus laevis (African clawed frog).